The primary structure comprises 354 residues: Alanine racemase (354 aa).

Residue Lys33 is the Proton acceptor; specific for D-alanine of the active site. An N6-(pyridoxal phosphate)lysine modification is found at Lys33. Arg127 is a substrate binding site. Tyr251 serves as the catalytic Proton acceptor; specific for L-alanine. Residue Met299 participates in substrate binding.

It belongs to the alanine racemase family. Pyridoxal 5'-phosphate serves as cofactor.

The enzyme catalyses L-alanine = D-alanine. The protein operates within amino-acid biosynthesis; D-alanine biosynthesis; D-alanine from L-alanine: step 1/1. Functionally, catalyzes the interconversion of L-alanine and D-alanine. May also act on other amino acids. This Fusobacterium nucleatum subsp. nucleatum (strain ATCC 25586 / DSM 15643 / BCRC 10681 / CIP 101130 / JCM 8532 / KCTC 2640 / LMG 13131 / VPI 4355) protein is Alanine racemase (alr).